Reading from the N-terminus, the 209-residue chain is Ribosomal RNA large subunit methyltransferase E (209 aa).

Residues Gly-63, Trp-65, Asp-83, Asp-99, and Asp-124 each contribute to the S-adenosyl-L-methionine site. Lys-164 functions as the Proton acceptor in the catalytic mechanism.

This sequence belongs to the class I-like SAM-binding methyltransferase superfamily. RNA methyltransferase RlmE family.

Its subcellular location is the cytoplasm. It carries out the reaction uridine(2552) in 23S rRNA + S-adenosyl-L-methionine = 2'-O-methyluridine(2552) in 23S rRNA + S-adenosyl-L-homocysteine + H(+). In terms of biological role, specifically methylates the uridine in position 2552 of 23S rRNA at the 2'-O position of the ribose in the fully assembled 50S ribosomal subunit. The chain is Ribosomal RNA large subunit methyltransferase E from Pectobacterium atrosepticum (strain SCRI 1043 / ATCC BAA-672) (Erwinia carotovora subsp. atroseptica).